The following is a 299-amino-acid chain: tRNA(Met) cytidine acetate ligase (299 aa).

ATP contacts are provided by residues 6–19, Gly100, Asn157, and Arg182; that span reads IAEY…HIYM.

This sequence belongs to the TmcAL family.

The protein resides in the cytoplasm. It catalyses the reaction cytidine(34) in elongator tRNA(Met) + acetate + ATP = N(4)-acetylcytidine(34) in elongator tRNA(Met) + AMP + diphosphate. Catalyzes the formation of N(4)-acetylcytidine (ac(4)C) at the wobble position of elongator tRNA(Met), using acetate and ATP as substrates. First activates an acetate ion to form acetyladenylate (Ac-AMP) and then transfers the acetyl group to tRNA to form ac(4)C34. This is tRNA(Met) cytidine acetate ligase from Mycoplasma mobile (strain ATCC 43663 / 163K / NCTC 11711) (Mesomycoplasma mobile).